Consider the following 132-residue polypeptide: Insulin-like 3 (132 aa).

The N-terminal stretch at 1–21 is a signal peptide; sequence MDRRPLTWALVLLGPALAIAL. Position 27 is a pyrrolidone carboxylic acid (glutamine 27). 3 cysteine pairs are disulfide-bonded: cysteine 34–cysteine 117, cysteine 46–cysteine 130, and cysteine 116–cysteine 121. Residues 67–104 constitute a propeptide, c peptide like; that stretch reads LLRWLEGQHLLHGLMASGDPVLVLAPQPLPQASRHHHH.

Belongs to the insulin family. Heterodimer of a B chain and an A chain linked by two disulfide bonds. 20% of B chains include an extra N-terminal pentapeptide. Expressed exclusively in Leydig cells of the testis.

The protein resides in the secreted. In terms of biological role, seems to play a role in testicular function. May be a trophic hormone with a role in testicular descent in fetal life. Is a ligand for LGR8 receptor. The sequence is that of Insulin-like 3 (INSL3) from Bos taurus (Bovine).